The primary structure comprises 175 residues: Anterior gradient protein 2 homolog (175 aa).

The first 20 residues, M1–A20, serve as a signal peptide directing secretion. The segment at K21–L40 is required to promote cell adhesion. Residues T24 to L44 are disordered. Over residues A29–P38 the composition is skewed to basic and acidic residues. Short sequence motifs (homodimer stabilization; interchain) lie at residues S45 to W54 and E60 to T67.

The protein belongs to the AGR family. As to quaternary structure, monomer and homodimer. Interacts with LYPD3 and DAG1 (alphaDAG1). Interacts with MUC2; disulfide-linked. In terms of tissue distribution, expressed in lung, skeletal muscle, testis, liver, stomach, colon, small intestine, the goblet cells of the intestine and the mucuous neck cells of the stomach.

Its subcellular location is the secreted. It is found in the endoplasmic reticulum. Functionally, required for MUC2 post-transcriptional synthesis and secretion. May play a role in the production of mucus by intestinal cells. Proto-oncogene that may play a role in cell migration, cell differentiation and cell growth. Promotes cell adhesion. This Mus musculus (Mouse) protein is Anterior gradient protein 2 homolog (Agr2).